Here is a 367-residue protein sequence, read N- to C-terminus: NAD(P)H-quinone oxidoreductase subunit 1, chloroplastic (367 aa).

Transmembrane regions (helical) follow at residues tryptophan 29–valine 49, valine 96–isoleucine 116, isoleucine 128–methionine 148, leucine 176–valine 196, isoleucine 204–leucine 224, leucine 266–isoleucine 286, valine 304–leucine 324, and phenylalanine 347–leucine 367.

The protein belongs to the complex I subunit 1 family. NDH is composed of at least 16 different subunits, 5 of which are encoded in the nucleus.

It is found in the plastid. It localises to the chloroplast thylakoid membrane. The enzyme catalyses a plastoquinone + NADH + (n+1) H(+)(in) = a plastoquinol + NAD(+) + n H(+)(out). It carries out the reaction a plastoquinone + NADPH + (n+1) H(+)(in) = a plastoquinol + NADP(+) + n H(+)(out). NDH shuttles electrons from NAD(P)H:plastoquinone, via FMN and iron-sulfur (Fe-S) centers, to quinones in the photosynthetic chain and possibly in a chloroplast respiratory chain. The immediate electron acceptor for the enzyme in this species is believed to be plastoquinone. Couples the redox reaction to proton translocation, and thus conserves the redox energy in a proton gradient. This chain is NAD(P)H-quinone oxidoreductase subunit 1, chloroplastic, found in Mesostigma viride (Green alga).